A 165-amino-acid polypeptide reads, in one-letter code: Cathelicidin-7 (165 aa).

Positions 1–29 (METQRASFSLGRSSLWLLLLGLVVPSASA) are cleaved as a signal peptide. The propeptide occupies 30-130 (QDLSYREAVL…FDITCNNIQS (101 aa)). 2 cysteine pairs are disulfide-bonded: Cys86–Cys97 and Cys108–Cys125. Position 164 is an arginine amide (Arg164).

It belongs to the cathelicidin family. Expressed in bone marrow myeloid cells, spleen and testis.

It localises to the secreted. In terms of biological role, exerts a potent antimicrobial activity. This chain is Cathelicidin-7 (CATHL7), found in Bos taurus (Bovine).